Reading from the N-terminus, the 111-residue chain is Glucosamine 6-phosphate N-acetyltransferase (111 aa).

The region spanning 1 to 111 (MKKDFHSTYY…MKKYASHSII (111 aa)) is the N-acetyltransferase domain. Substrate is bound by residues 33–36 (KFLR) and 45–47 (EEV). Acetyl-CoA contacts are provided by residues 47–49 (VIV) and 55–60 (RKAIGK). Substrate contacts are provided by residues 76–77 (YK) and aspartate 81. 90 to 92 (YEK) serves as a coordination point for acetyl-CoA.

This sequence belongs to the acetyltransferase family. GNA1 subfamily.

The enzyme catalyses D-glucosamine 6-phosphate + acetyl-CoA = N-acetyl-D-glucosamine 6-phosphate + CoA + H(+). Its pathway is nucleotide-sugar biosynthesis; UDP-N-acetyl-alpha-D-glucosamine biosynthesis; N-acetyl-alpha-D-glucosamine 1-phosphate from alpha-D-glucosamine 6-phosphate (route I): step 1/2. The protein is Glucosamine 6-phosphate N-acetyltransferase (gna1) of Schizosaccharomyces pombe (strain 972 / ATCC 24843) (Fission yeast).